Consider the following 538-residue polypeptide: uncharacterized protein (538 aa).

The segment covering Met-1–Ser-13 has biased composition (low complexity). A disordered region spans residues Met-1–Phe-43. 12 helical membrane-spanning segments follow: residues Ile-97–Phe-117, Val-134–Ala-154, Lys-163–Ala-183, Phe-194–Met-214, Ile-226–Ala-246, Trp-254–Lys-274, Pro-328–Leu-348, Ala-367–Phe-387, Leu-408–Ser-428, Val-434–Phe-454, Leu-458–Ile-478, and Gly-504–Phe-524.

Belongs to the major facilitator superfamily. CAR1 family.

The protein localises to the endoplasmic reticulum. Its subcellular location is the membrane. This is an uncharacterized protein from Schizosaccharomyces pombe (strain 972 / ATCC 24843) (Fission yeast).